The following is a 93-amino-acid chain: Small ribosomal subunit protein bS16 (93 aa).

It belongs to the bacterial ribosomal protein bS16 family.

In Roseiflexus castenholzii (strain DSM 13941 / HLO8), this protein is Small ribosomal subunit protein bS16.